The following is a 171-amino-acid chain: Glutamyl-tRNA(Gln) amidotransferase subunit F, mitochondrial (171 aa).

This sequence belongs to the GatF family. As to quaternary structure, subunit of the heterotrimeric GatFAB amidotransferase (AdT) complex, composed of A, B and F subunits.

The protein localises to the mitochondrion inner membrane. The catalysed reaction is L-glutamyl-tRNA(Gln) + L-glutamine + ATP + H2O = L-glutaminyl-tRNA(Gln) + L-glutamate + ADP + phosphate + H(+). Its function is as follows. Allows the formation of correctly charged Gln-tRNA(Gln) through the transamidation of misacylated Glu-tRNA(Gln) in the mitochondria. The reaction takes place in the presence of glutamine and ATP through an activated gamma-phospho-Glu-tRNA(Gln). Required for proper protein synthesis within the mitochondrion. This is Glutamyl-tRNA(Gln) amidotransferase subunit F, mitochondrial from Zygosaccharomyces rouxii (strain ATCC 2623 / CBS 732 / NBRC 1130 / NCYC 568 / NRRL Y-229).